The chain runs to 202 residues: dITP/XTP pyrophosphatase (202 aa).

7 to 12 (TTNEGK) is a substrate binding site. Positions 37 and 66 each coordinate Mg(2+). D66 serves as the catalytic Proton acceptor. Residues S67, 155-158 (FGYD), K178, and 183-184 (HR) each bind substrate.

This sequence belongs to the HAM1 NTPase family. As to quaternary structure, homodimer. It depends on Mg(2+) as a cofactor.

The catalysed reaction is XTP + H2O = XMP + diphosphate + H(+). It carries out the reaction dITP + H2O = dIMP + diphosphate + H(+). It catalyses the reaction ITP + H2O = IMP + diphosphate + H(+). Pyrophosphatase that catalyzes the hydrolysis of nucleoside triphosphates to their monophosphate derivatives, with a high preference for the non-canonical purine nucleotides XTP (xanthosine triphosphate), dITP (deoxyinosine triphosphate) and ITP. Seems to function as a house-cleaning enzyme that removes non-canonical purine nucleotides from the nucleotide pool, thus preventing their incorporation into DNA/RNA and avoiding chromosomal lesions. The polypeptide is dITP/XTP pyrophosphatase (Aquifex aeolicus (strain VF5)).